We begin with the raw amino-acid sequence, 38 residues long: Potassium channel toxin alpha-KTx 3.11 (38 aa).

3 disulfide bridges follow: C8–C28, C14–C33, and C18–C35.

Belongs to the short scorpion toxin superfamily. Potassium channel inhibitor family. Alpha-KTx 03 subfamily. In terms of tissue distribution, expressed by the venom gland.

It localises to the secreted. Blocks the voltage-gated potassium channel Kv1.3/KCNA3 (IC(50)=7.2 nM). Correnti and colleagues have also shown that this toxin inhibits Kv1.1/KCNA1, which is different from Abdel-Mottaleb and colleagues conclusions. The chain is Potassium channel toxin alpha-KTx 3.11 from Odontobuthus doriae (Yellow Iranian scorpion).